Consider the following 389-residue polypeptide: Cytochrome b (389 aa).

A run of 4 helical transmembrane segments spans residues 32-52 (FGSL…FLAM), 76-98 (YILR…VHIG), 113-133 (LWSI…LGYV), and 179-199 (FFSL…AHMI). Heme b-binding residues include His82 and His96. His183 and His197 together coordinate heme b. His202 provides a ligand contact to a ubiquinone. The next 4 membrane-spanning stretches (helical) occupy residues 225 to 245 (FIFK…IIVF), 289 to 309 (LLGV…PFVD), 322 to 342 (INMV…LVGA), and 349 to 369 (FIFL…VIVP).

This sequence belongs to the cytochrome b family. As to quaternary structure, fungal cytochrome b-c1 complex contains 10 subunits; 3 respiratory subunits, 2 core proteins and 5 low-molecular weight proteins. Cytochrome b-c1 complex is a homodimer. It depends on heme b as a cofactor.

The protein resides in the mitochondrion inner membrane. Functionally, component of the ubiquinol-cytochrome c reductase complex (complex III or cytochrome b-c1 complex) that is part of the mitochondrial respiratory chain. The b-c1 complex mediates electron transfer from ubiquinol to cytochrome c. Contributes to the generation of a proton gradient across the mitochondrial membrane that is then used for ATP synthesis. This chain is Cytochrome b (COB), found in Mycena viridimarginata.